Here is a 437-residue protein sequence, read N- to C-terminus: Eukaryotic peptide chain release factor subunit 1 (437 aa).

A2 is subject to N-acetylalanine. An NIKS motif; plays an important role in translational termination motif is present at residues 61–64 (NIKS). K63 carries the 4-hydroxylysine modification. K87 participates in a covalent cross-link: Glycyl lysine isopeptide (Lys-Gly) (interchain with G-Cter in SUMO2). The residue at position 185 (Q185) is an N5-methylglutamine. T347 is modified (phosphothreonine). Residue K404 forms a Glycyl lysine isopeptide (Lys-Gly) (interchain with G-Cter in SUMO2) linkage.

Belongs to the eukaryotic release factor 1 family. As to quaternary structure, component of the eRF1-eRF3-GTP ternary complex, composed of ETF1/ERF1 and eRF3 (GSPT1/ERF3A or GSPT2/ERF3B) and GTP. Component of the transient SURF (SMG1-UPF1-eRF1-eRF3) complex. Interacts with JMJD4. The ETF1-GSPT1 complex interacts with JMJD4. In terms of processing, hydroxylation at Lys-63 by JMJD4 promotes its translational termination efficiency. Post-translationally, methylated at Gln-185 by N6AMT1. Ubiquitinated via 'Lys-6'-linked polyubiquitin chains by RNF14 and RNF25 in response to ribosome collisions (ribosome stalling), leading to its degradation by the proteasome and rescue of stalled ribosomes.

Its subcellular location is the cytoplasm. Component of the eRF1-eRF3-GTP ternary complex, a ternary complex that mediates translation termination in response to the termination codons. The eRF1-eRF3-GTP complex binds to a stop codon in the ribosomal A-site. ETF1/ERF1 is responsible for stop codon recognition and inducing hydrolysis of peptidyl-tRNA. Following GTP hydrolysis, eRF3 (GSPT1/ERF3A or GSPT2/ERF3B) dissociates, permitting ETF1/eRF1 to accommodate fully in the A-site, followed by hydrolysis of peptidyl-tRNA. Component of the transient SURF complex which recruits UPF1 to stalled ribosomes in the context of nonsense-mediated decay (NMD) of mRNAs containing premature stop codons. Required for SHFL-mediated translation termination which inhibits programmed ribosomal frameshifting (-1PRF) of mRNA from viruses and cellular genes. In Pongo abelii (Sumatran orangutan), this protein is Eukaryotic peptide chain release factor subunit 1 (ETF1).